A 572-amino-acid chain; its full sequence is mRNA cap guanine-N(7) methyltransferase (572 aa).

2 disordered regions span residues 1-75 (MPED…GSRV) and 110-140 (EKAI…FPSS). Composition is skewed to basic and acidic residues over residues 24 to 39 (ANDG…RVHD) and 59 to 69 (SADENKDKKYD). The span at 123-140 (TTTTPSSTTSSSSSFPSS) shows a compositional bias: low complexity. An mRNA cap 0 methyltransferase domain is found at 262–571 (SPIYKLRNFN…FYVAFVFEKV (310 aa)). 271–272 (NN) is an mRNA binding site. The S-adenosyl-L-methionine site is built by Lys-275, Cys-302, Asp-324, Asp-366, Gln-396, and Tyr-401.

It belongs to the class I-like SAM-binding methyltransferase superfamily. mRNA cap 0 methyltransferase family.

Its subcellular location is the nucleus. It catalyses the reaction a 5'-end (5'-triphosphoguanosine)-ribonucleoside in mRNA + S-adenosyl-L-methionine = a 5'-end (N(7)-methyl 5'-triphosphoguanosine)-ribonucleoside in mRNA + S-adenosyl-L-homocysteine. Its function is as follows. Responsible for methylating the 5'-cap structure of mRNAs. This Lodderomyces elongisporus (strain ATCC 11503 / CBS 2605 / JCM 1781 / NBRC 1676 / NRRL YB-4239) (Yeast) protein is mRNA cap guanine-N(7) methyltransferase (ABD1).